A 150-amino-acid polypeptide reads, in one-letter code: Large ribosomal subunit protein bL9 (150 aa).

It belongs to the bacterial ribosomal protein bL9 family.

In terms of biological role, binds to the 23S rRNA. The protein is Large ribosomal subunit protein bL9 of Moorella thermoacetica (strain ATCC 39073 / JCM 9320).